We begin with the raw amino-acid sequence, 105 residues long: Intracellular chorismate mutase (105 aa).

The Chorismate mutase domain maps to 23–105 (SQPVPEIDTL…LRLGRGRLGH (83 aa)). Positions 61, 70, and 74 each coordinate chorismate.

As to quaternary structure, homodimer. Interacts with AroG.

Its subcellular location is the cytoplasm. It catalyses the reaction chorismate = prephenate. Its pathway is metabolic intermediate biosynthesis; prephenate biosynthesis; prephenate from chorismate: step 1/1. The formation of the complex with AroG activates the chorismate mutase activity. Catalyzes the Claisen rearrangement of chorismate to prephenate. Probably involved in the aromatic amino acid biosynthesis. The polypeptide is Intracellular chorismate mutase (Mycobacterium bovis (strain ATCC BAA-935 / AF2122/97)).